Reading from the N-terminus, the 433-residue chain is Enolase (433 aa).

Residue Q167 participates in (2R)-2-phosphoglycerate binding. The active-site Proton donor is E209. Mg(2+) contacts are provided by D246, E291, and D318. (2R)-2-phosphoglycerate is bound by residues K343, R372, S373, and K394. K343 serves as the catalytic Proton acceptor.

This sequence belongs to the enolase family. In terms of assembly, component of the RNA degradosome, a multiprotein complex involved in RNA processing and mRNA degradation. Mg(2+) is required as a cofactor.

The protein resides in the cytoplasm. It localises to the secreted. The protein localises to the cell surface. The catalysed reaction is (2R)-2-phosphoglycerate = phosphoenolpyruvate + H2O. It functions in the pathway carbohydrate degradation; glycolysis; pyruvate from D-glyceraldehyde 3-phosphate: step 4/5. Its function is as follows. Catalyzes the reversible conversion of 2-phosphoglycerate (2-PG) into phosphoenolpyruvate (PEP). It is essential for the degradation of carbohydrates via glycolysis. This Photorhabdus laumondii subsp. laumondii (strain DSM 15139 / CIP 105565 / TT01) (Photorhabdus luminescens subsp. laumondii) protein is Enolase.